A 395-amino-acid polypeptide reads, in one-letter code: uncharacterized protein (395 aa).

10 helical membrane-spanning segments follow: residues 19 to 39 (IGIA…IAII), 49 to 69 (VLLI…IYEL), 87 to 107 (LTWI…AVGG), 137 to 157 (LVII…PLGT), 172 to 192 (YINL…FYLI), 206 to 226 (TINI…SLIA), 252 to 272 (LIGG…MGMG), 279 to 299 (LFIM…KILA), 311 to 331 (GLVF…GSLI), and 359 to 379 (VLCT…GAVI).

This sequence belongs to the chloride channel (TC 2.A.49) family.

Its subcellular location is the cell membrane. This is an uncharacterized protein from Methanocaldococcus jannaschii (strain ATCC 43067 / DSM 2661 / JAL-1 / JCM 10045 / NBRC 100440) (Methanococcus jannaschii).